The sequence spans 854 residues: uncharacterized protein (854 aa).

This sequence belongs to the PEP-utilizing enzyme family.

This is an uncharacterized protein from Mycobacterium tuberculosis (strain CDC 1551 / Oshkosh).